The primary structure comprises 160 residues: MGVTKKPDLNDPVLRAKLAKGMGHNYYGEPAWPNDLLYIFPVVILGTIACNVGLAVLEPSMIGEPPDPFATPLEILPEWYFFPVFQILRTVPNKLLGVLLMVSVPAGLLTVPFLENVNKFQNPFRRPVATTVFLIGTAVALWLGIGATLPIDKSLTLGLF.

Transmembrane regions (helical) follow at residues 36–56 (LLYI…GLAV), 95–115 (LLGV…PFLE), and 131–151 (TVFL…TLPI).

It belongs to the cytochrome b family. PetD subfamily. As to quaternary structure, the 4 large subunits of the cytochrome b6-f complex are cytochrome b6, subunit IV (17 kDa polypeptide, petD), cytochrome f and the Rieske protein, while the 4 small subunits are petG, petL, petM and petN. The complex functions as a dimer.

The protein resides in the plastid. The protein localises to the chloroplast thylakoid membrane. Component of the cytochrome b6-f complex, which mediates electron transfer between photosystem II (PSII) and photosystem I (PSI), cyclic electron flow around PSI, and state transitions. The sequence is that of Cytochrome b6-f complex subunit 4 from Solanum tuberosum (Potato).